We begin with the raw amino-acid sequence, 538 residues long: C-22 sterol desaturase ERG5 (538 aa).

A helical membrane pass occupies residues 46–66 (LKIFATLICILLVWDQVAYQI). Residues Lys-164 and Lys-198 each participate in a glycyl lysine isopeptide (Lys-Gly) (interchain with G-Cter in ubiquitin) cross-link. Heme is bound at residue Cys-476.

It belongs to the cytochrome P450 family. As to quaternary structure, interacts with ERG28. Heme is required as a cofactor.

It localises to the endoplasmic reticulum membrane. It carries out the reaction 5-dehydroepisterol + NADPH + O2 + H(+) = ergosta-5,7,22,24(28)-tetraen-3beta-ol + NADP(+) + 2 H2O. Its pathway is steroid metabolism; ergosterol biosynthesis; ergosterol from zymosterol: step 4/5. Its function is as follows. C-22 sterol desaturase; part of the third module of ergosterol biosynthesis pathway that includes the late steps of the pathway. ERG5 converts 5-dehydroepisterol into ergosta-5,7,22,24(28)-tetraen-3beta-ol by forming the C-22(23) double bond in the sterol side chain. The third module or late pathway involves the ergosterol synthesis itself through consecutive reactions that mainly occur in the endoplasmic reticulum (ER) membrane. Firstly, the squalene synthase ERG9 catalyzes the condensation of 2 farnesyl pyrophosphate moieties to form squalene, which is the precursor of all steroids. Squalene synthase is crucial for balancing the incorporation of farnesyl diphosphate (FPP) into sterol and nonsterol isoprene synthesis. Secondly, the squalene epoxidase ERG1 catalyzes the stereospecific oxidation of squalene to (S)-2,3-epoxysqualene, which is considered to be a rate-limiting enzyme in steroid biosynthesis. Then, the lanosterol synthase ERG7 catalyzes the cyclization of (S)-2,3 oxidosqualene to lanosterol, a reaction that forms the sterol core. In the next steps, lanosterol is transformed to zymosterol through a complex process involving various demethylation, reduction and desaturation reactions. The lanosterol 14-alpha-demethylase ERG11 (also known as CYP51) catalyzes C14-demethylation of lanosterol to produce 4,4'-dimethyl cholesta-8,14,24-triene-3-beta-ol, which is critical for ergosterol biosynthesis. The C-14 reductase ERG24 reduces the C14=C15 double bond of 4,4-dimethyl-cholesta-8,14,24-trienol to produce 4,4-dimethyl-cholesta-8,24-dienol. 4,4-dimethyl-cholesta-8,24-dienol is substrate of the C-4 demethylation complex ERG25-ERG26-ERG27 in which ERG25 catalyzes the three-step monooxygenation required for the demethylation of 4,4-dimethyl and 4alpha-methylsterols, ERG26 catalyzes the oxidative decarboxylation that results in a reduction of the 3-beta-hydroxy group at the C-3 carbon to an oxo group, and ERG27 is responsible for the reduction of the keto group on the C-3. ERG28 has a role as a scaffold to help anchor ERG25, ERG26 and ERG27 to the endoplasmic reticulum and ERG29 regulates the activity of the iron-containing C4-methylsterol oxidase ERG25. Then, the sterol 24-C-methyltransferase ERG6 catalyzes the methyl transfer from S-adenosyl-methionine to the C-24 of zymosterol to form fecosterol. The C-8 sterol isomerase ERG2 catalyzes the reaction which results in unsaturation at C-7 in the B ring of sterols and thus converts fecosterol to episterol. The sterol-C5-desaturase ERG3 then catalyzes the introduction of a C-5 double bond in the B ring to produce 5-dehydroepisterol. The C-22 sterol desaturase ERG5 further converts 5-dehydroepisterol into ergosta-5,7,22,24(28)-tetraen-3beta-ol by forming the C-22(23) double bond in the sterol side chain. Finally, ergosta-5,7,22,24(28)-tetraen-3beta-ol is substrate of the C-24(28) sterol reductase ERG4 to produce ergosterol. This Saccharomyces cerevisiae (strain ATCC 204508 / S288c) (Baker's yeast) protein is C-22 sterol desaturase ERG5.